A 690-amino-acid polypeptide reads, in one-letter code: Protein arginine N-methyltransferase 7 (690 aa).

SAM-dependent MTase PRMT-type domains lie at 5-355 (FQDS…FSLW) and 364-690 (KEPL…EEEQ).

This sequence belongs to the class I-like SAM-binding methyltransferase superfamily. Protein arginine N-methyltransferase family. PRMT7 subfamily.

Its function is as follows. Essential arginine methyltransferase that can both catalyze the formation of omega-N monomethylarginine (MMA) and symmetrical dimethylarginine (sDMA). Specifically mediates the symmetrical dimethylation of arginine residues in the small nuclear ribonucleoproteins SmD1 and SmD3. This Anopheles gambiae (African malaria mosquito) protein is Protein arginine N-methyltransferase 7 (Art7).